A 255-amino-acid polypeptide reads, in one-letter code: 5'-nucleotidase SurE (255 aa).

Aspartate 8, aspartate 9, serine 39, and asparagine 91 together coordinate a divalent metal cation.

It belongs to the SurE nucleotidase family. The cofactor is a divalent metal cation.

The protein resides in the cytoplasm. It carries out the reaction a ribonucleoside 5'-phosphate + H2O = a ribonucleoside + phosphate. Its function is as follows. Nucleotidase that shows phosphatase activity on nucleoside 5'-monophosphates. The sequence is that of 5'-nucleotidase SurE from Nitrosospira multiformis (strain ATCC 25196 / NCIMB 11849 / C 71).